Here is a 214-residue protein sequence, read N- to C-terminus: Adenylate kinase (214 aa).

Position 10–15 (10–15 (GAGKGT)) interacts with ATP. Residues 30–59 (STGDMLRAAIKAGSELGQKAKILMDMGQLV) form an NMP region. Residues T31, R36, 57-59 (QLV), 85-88 (GFPR), and Q92 contribute to the AMP site. Positions 122-159 (GRRVHPASGRTYHIVYNPPKVEDKDDITGEDLILRADD) are LID. ATP is bound by residues R123 and 132 to 133 (TY). 2 residues coordinate AMP: R156 and R167. An ATP-binding site is contributed by Q200.

The protein belongs to the adenylate kinase family. In terms of assembly, monomer.

It is found in the cytoplasm. It catalyses the reaction AMP + ATP = 2 ADP. Its pathway is purine metabolism; AMP biosynthesis via salvage pathway; AMP from ADP: step 1/1. Functionally, catalyzes the reversible transfer of the terminal phosphate group between ATP and AMP. Plays an important role in cellular energy homeostasis and in adenine nucleotide metabolism. This Histophilus somni (strain 129Pt) (Haemophilus somnus) protein is Adenylate kinase.